A 495-amino-acid polypeptide reads, in one-letter code: Probable leucine aminopeptidase 2 (495 aa).

The signal sequence occupies residues 1-21; sequence MKSQLLSLAVAVTTISQGVVG. The region spanning 130 to 216 is the PA domain; it reads MAELVVAKNN…SQEDGKNLAT (87 aa). N-linked (GlcNAc...) asparagine glycans are attached at residues asparagine 142 and asparagine 235. The Zn(2+) site is built by histidine 259 and aspartate 271. N-linked (GlcNAc...) asparagine glycosylation occurs at asparagine 272. Glutamate 303 acts as the Proton acceptor in catalysis. Zn(2+) is bound by residues glutamate 304 and aspartate 332. The N-linked (GlcNAc...) asparagine glycan is linked to asparagine 352. Residue histidine 430 participates in Zn(2+) binding.

This sequence belongs to the peptidase M28 family. M28A subfamily. Monomer. Zn(2+) is required as a cofactor.

The protein resides in the secreted. Functionally, extracellular aminopeptidase that releases a wide variety of amino acids from natural peptides and contributes to pathogenicity. This is Probable leucine aminopeptidase 2 (LAP2) from Arthroderma benhamiae (strain ATCC MYA-4681 / CBS 112371) (Trichophyton mentagrophytes).